The chain runs to 1165 residues: Tectonin beta-propeller repeat-containing protein 1 (1165 aa).

TECPR repeat units follow at residues 209–240 (LSVWAVSLQGKVWYREDVSHSNPEGSSWSLLD), 254–285 (DLLWATLWEGQALVREGINRSNPKGSSWSIVE), 301–332 (SVVWAVTKDWKVWFRRGVNSHNPCGTSWIEMV), and 344–376 (DQVWGIGCEDRAVYFRQGVTPSELSGKTWKAII). Phosphoserine occurs at positions 386, 388, 391, 412, and 417. Positions 404-486 (RGSGESAPSD…GPAPTPAELP (83 aa)) are disordered. The PH domain maps to 611–717 (KTGALQWWCD…WLALLSLSCC (107 aa)). The TECPR 5 repeat unit spans residues 729–756 (QAIWSITCKGDIFVSEPSPDLEAHEHPL). Phosphoserine is present on residues Ser-938 and Ser-949. 4 TECPR repeats span residues 953 to 984 (IALWAVSDKGDVLCRLGVSELNPAGSSWLHVG), 998 to 1029 (YQVWAVARDGSAFYRGSVYPSQPAGDCWYHIP), 1044 to 1075 (TSVYALDENGNLWYRQGITPSYPQGSSWEHVS), and 1087 to 1127 (DQVW…DYGI). The tract at residues 1140–1165 (ATRAPRSSSQEQEPSAPPEAHGPVCC) is disordered. The segment covering 1143 to 1153 (APRSSSQEQEP) has biased composition (low complexity).

The protein belongs to the TECPR1 family. Interacts with ATG5; the interaction is direct. Interacts with WIPI2. Interacts with the ATG5-ATG12 conjugate, the interaction is however mutually exclusive with ATG16, since it does not interact with ATG12-ATG5-ATG16 complex.

The protein resides in the cytoplasmic vesicle. Its subcellular location is the autophagosome membrane. It is found in the lysosome membrane. Tethering factor involved in autophagy. Involved in autophagosome maturation by promoting the autophagosome fusion with lysosomes: acts by associating with both the ATG5-ATG12 conjugate and phosphatidylinositol-3-phosphate (PtdIns(3)P) present at the surface of autophagosomes. Also involved in selective autophagy against bacterial pathogens, by being required for phagophore/preautophagosomal structure biogenesis and maturation. In Homo sapiens (Human), this protein is Tectonin beta-propeller repeat-containing protein 1 (TECPR1).